Reading from the N-terminus, the 328-residue chain is 3-dehydroquinate synthase (328 aa).

It belongs to the archaeal-type DHQ synthase family.

It carries out the reaction 2-amino-2,3,7-trideoxy-D-lyxo-hept-6-ulosonate + NAD(+) + H2O = 3-dehydroquinate + NH4(+) + NADH + H(+). Its function is as follows. Catalyzes the oxidative deamination and cyclization of 2-amino-3,7-dideoxy-D-threo-hept-6-ulosonic acid (ADH) to yield 3-dehydroquinate (DHQ), which is fed into the canonical shikimic pathway of aromatic amino acid biosynthesis. This is 3-dehydroquinate synthase from Methanospirillum hungatei JF-1 (strain ATCC 27890 / DSM 864 / NBRC 100397 / JF-1).